Here is a 713-residue protein sequence, read N- to C-terminus: MSHPNLLVELFVEELPPKALKKLGESFAGTLAASLKAGGLAGADAVVTPFASPRRLAVHVTGVAAKAADKSVLHKLMPVAVALDAAGNATPALLKKLAALGADASVVPSLKRQPDGKAEALFLDSQVAGATLAEGLQKALDDALAKLPIPKVMGYQLADGWTSVNFVRPAHGLVALHGDDVVPVATLGLVAGRSTHGHRFEAAVPTVELRHADSYAEQLETEGAVIAGFEARRAEIVRQLDAAAAAQGLKPIDDDALLDEVTALVERPNVLVCQFEPEFLAVPQECLILTMKANQKYFPLLDAAGKLTHKFLIVSNIRPDDASAVIGGNERVVRPRLADAKFFFDQDRKKTLESRVPGLARVVYHGKLGTQGERAERVRAIGHAIVNQLRMATIPYTVDAQDEFAVLDSKVQQAALLAKTDLLTDMVGEFPELQGIMGGYYARHEGLRDGVAIAIEDHYKPRFAGDALPRNHTGTVLALADKLETLVGLFGIGQLPTGDRDPFALRRHALGVIRILVEKNLPLDLPALLNGAVPAFGELIEDPRLALFDFMRDRLAVNLRDQGYSAQEVDAVLALEPARLGDVPKRLAAVRAFAALPEAAALAAANKRIGNILKKAEGTVEARIDAALLAEPAEQQLAAALAQVQPGADALFAQGEYAASLQALAALKAPVDAFFDDVMVNAEDPALRANRLGLLATLHGAMNRVAELARLAA.

It belongs to the class-II aminoacyl-tRNA synthetase family. Tetramer of two alpha and two beta subunits.

The protein localises to the cytoplasm. The enzyme catalyses tRNA(Gly) + glycine + ATP = glycyl-tRNA(Gly) + AMP + diphosphate. The sequence is that of Glycine--tRNA ligase beta subunit from Leptothrix cholodnii (strain ATCC 51168 / LMG 8142 / SP-6) (Leptothrix discophora (strain SP-6)).